A 339-amino-acid polypeptide reads, in one-letter code: Ketol-acid reductoisomerase (NADP(+)) (339 aa).

Residues methionine 1–threonine 182 form the KARI N-terminal Rossmann domain. NADP(+) contacts are provided by residues tyrosine 24–glutamine 27, serine 51, serine 53, and aspartate 83–glutamine 86. Residue histidine 108 is part of the active site. Glycine 134 contributes to the NADP(+) binding site. The 146-residue stretch at serine 183–alanine 328 folds into the KARI C-terminal knotted domain. Positions 191, 195, 227, and 231 each coordinate Mg(2+). Serine 252 contacts substrate.

It belongs to the ketol-acid reductoisomerase family. Mg(2+) serves as cofactor.

It catalyses the reaction (2R)-2,3-dihydroxy-3-methylbutanoate + NADP(+) = (2S)-2-acetolactate + NADPH + H(+). The enzyme catalyses (2R,3R)-2,3-dihydroxy-3-methylpentanoate + NADP(+) = (S)-2-ethyl-2-hydroxy-3-oxobutanoate + NADPH + H(+). It functions in the pathway amino-acid biosynthesis; L-isoleucine biosynthesis; L-isoleucine from 2-oxobutanoate: step 2/4. The protein operates within amino-acid biosynthesis; L-valine biosynthesis; L-valine from pyruvate: step 2/4. Involved in the biosynthesis of branched-chain amino acids (BCAA). Catalyzes an alkyl-migration followed by a ketol-acid reduction of (S)-2-acetolactate (S2AL) to yield (R)-2,3-dihydroxy-isovalerate. In the isomerase reaction, S2AL is rearranged via a Mg-dependent methyl migration to produce 3-hydroxy-3-methyl-2-ketobutyrate (HMKB). In the reductase reaction, this 2-ketoacid undergoes a metal-dependent reduction by NADPH to yield (R)-2,3-dihydroxy-isovalerate. This chain is Ketol-acid reductoisomerase (NADP(+)), found in Hyphomonas neptunium (strain ATCC 15444).